Reading from the N-terminus, the 435-residue chain is 3-phosphoshikimate 1-carboxyvinyltransferase (435 aa).

K28, S29, and R33 together coordinate 3-phosphoshikimate. K28 serves as a coordination point for phosphoenolpyruvate. Residues G100 and R128 each contribute to the phosphoenolpyruvate site. 3-phosphoshikimate is bound by residues S173, Q175, D321, and K348. Residue Q175 participates in phosphoenolpyruvate binding. D321 acts as the Proton acceptor in catalysis. R352 and R394 together coordinate phosphoenolpyruvate.

This sequence belongs to the EPSP synthase family. Monomer.

It localises to the cytoplasm. It carries out the reaction 3-phosphoshikimate + phosphoenolpyruvate = 5-O-(1-carboxyvinyl)-3-phosphoshikimate + phosphate. It participates in metabolic intermediate biosynthesis; chorismate biosynthesis; chorismate from D-erythrose 4-phosphate and phosphoenolpyruvate: step 6/7. Catalyzes the transfer of the enolpyruvyl moiety of phosphoenolpyruvate (PEP) to the 5-hydroxyl of shikimate-3-phosphate (S3P) to produce enolpyruvyl shikimate-3-phosphate and inorganic phosphate. This Desulfitobacterium hafniense (strain DSM 10664 / DCB-2) protein is 3-phosphoshikimate 1-carboxyvinyltransferase.